The following is a 210-amino-acid chain: Mating-type-like protein ALPHA2, silenced copy at MTL3 (210 aa).

Residues 108–170 constitute a DNA-binding region (homeobox; TALE-type); it reads ASYRGHRFTR…NRRRKQKSIY (63 aa).

It belongs to the TALE/M-ATYP homeobox family.

The protein resides in the nucleus. Mating type proteins are sequence specific DNA-binding proteins that act as master switches in yeast differentiation by controlling gene expression in a cell type-specific fashion. The polypeptide is Mating-type-like protein ALPHA2, silenced copy at MTL3 (MTL3alpha2) (Candida glabrata (strain ATCC 2001 / BCRC 20586 / JCM 3761 / NBRC 0622 / NRRL Y-65 / CBS 138) (Yeast)).